A 175-amino-acid chain; its full sequence is Vitamin K epoxide reductase complex subunit 1-like protein 1 (175 aa).

The Cytoplasmic segment spans residues 1-12; sequence MAAPVLRVSTPR. Residues 13–35 traverse the membrane as a helical segment; the sequence is WERIARVLVCLLGILLSLYAFHV. At 36–86 the chain is on the lumenal side; that stretch reads EREHARDPSYKALCDVSSSISCSKVFGSRWGRGFGLLGSIFGNDSALNQPN. The cysteines at positions 49 and 57 are disulfide-linked. Residue asparagine 86 coordinates (S)-warfarin. A helical membrane pass occupies residues 87 to 101; it reads SVYGIVFYAFQLLLG. Residues 102–106 lie on the Cytoplasmic side of the membrane; that stretch reads MTVSA. Residues 107–134 form a helical membrane-spanning segment; the sequence is MAALILMTTSIMSVVGSLYLGYILYFVL. Over 135 to 137 the chain is Lumenal; it reads KDL. A disulfide bond links cysteine 138 and cysteine 141. A helical membrane pass occupies residues 138 to 159; sequence CVICVTTYALNFILFVLNYKRL. Cysteine 141 and tyrosine 145 together coordinate phylloquinone. Residue tyrosine 145 coordinates (S)-warfarin. Over 160 to 175 the chain is Cytoplasmic; sequence VYLNEAWKQKLQAKQD.

It belongs to the VKOR family.

Its subcellular location is the endoplasmic reticulum membrane. It catalyses the reaction phylloquinone + [protein]-disulfide + H2O = 2,3-epoxyphylloquinone + [protein]-dithiol. It carries out the reaction phylloquinol + [protein]-disulfide = phylloquinone + [protein]-dithiol. With respect to regulation, inhibited by warfarin (coumadin). Warfarin locks VKORC1 in both redox states into the closed conformation. In terms of biological role, involved in vitamin K metabolism. Can reduce inactive vitamin K 2,3-epoxide to active vitamin K, and may contribute to vitamin K-mediated protection against oxidative stress. Plays a role in vitamin K-dependent gamma-carboxylation of Glu residues in target proteins. This Takifugu rubripes (Japanese pufferfish) protein is Vitamin K epoxide reductase complex subunit 1-like protein 1 (vkorc1l1).